The chain runs to 469 residues: Ribosomal protein uS12 methylthiotransferase RimO (469 aa).

The 115-residue stretch at 1 to 115 (MKFHIITLGC…IGSVVAGGVA (115 aa)) folds into the MTTase N-terminal domain. Residues C10, C46, C78, C180, C184, and C187 each coordinate [4Fe-4S] cluster. One can recognise a Radical SAM core domain in the interval 166–398 (NKRGPSAYLK…MAVQQVISRA (233 aa)). The 69-residue stretch at 401–469 (ARFVGQTMKV…TDYDLWGEIV (69 aa)) folds into the TRAM domain.

It belongs to the methylthiotransferase family. RimO subfamily. The cofactor is [4Fe-4S] cluster.

It localises to the cytoplasm. It carries out the reaction L-aspartate(89)-[ribosomal protein uS12]-hydrogen + (sulfur carrier)-SH + AH2 + 2 S-adenosyl-L-methionine = 3-methylsulfanyl-L-aspartate(89)-[ribosomal protein uS12]-hydrogen + (sulfur carrier)-H + 5'-deoxyadenosine + L-methionine + A + S-adenosyl-L-homocysteine + 2 H(+). Its function is as follows. Catalyzes the methylthiolation of an aspartic acid residue of ribosomal protein uS12. The protein is Ribosomal protein uS12 methylthiotransferase RimO of Herpetosiphon aurantiacus (strain ATCC 23779 / DSM 785 / 114-95).